Here is a 349-residue protein sequence, read N- to C-terminus: Insulin gene enhancer protein isl-1 (349 aa).

2 LIM zinc-binding domains span residues 17-70 (CVGC…CKRD) and 79-133 (CAKC…RADH). Residues 181 to 240 (TTRVRTVLNEKQLHTLRTCYNANPRPDALMKEQLVEMTGLSPRVIRVWFQNKRCKDKKRS) constitute a DNA-binding region (homeobox). The segment at 312-349 (VNFSEGGPGSNSTGSEVASMSSQLPDTPNSMVASPIEA) is disordered. Residues 321–343 (SNSTGSEVASMSSQLPDTPNSMV) show a composition bias toward polar residues.

It localises to the nucleus. Functionally, DNA-binding transcriptional activator. Recognizes and binds to the consensus octamer binding site 5'-ATAATTAA-3' in promoter of target genes. Plays a fundamental role in the gene regulatory network essential for retinal ganglion cell (RGC) differentiation. May be involved in subtype specialization of primary motoneurons. May bind to insulin gene enhancer sequences. Essential for heart development. The sequence is that of Insulin gene enhancer protein isl-1 (isl1) from Danio rerio (Zebrafish).